The following is a 352-amino-acid chain: Chorismate synthase (352 aa).

NADP(+)-binding residues include R48 and R54. FMN-binding positions include R125 to S127, N238 to A239, G278, K293 to S297, and R319.

It belongs to the chorismate synthase family. As to quaternary structure, homotetramer. FMNH2 serves as cofactor.

The enzyme catalyses 5-O-(1-carboxyvinyl)-3-phosphoshikimate = chorismate + phosphate. It participates in metabolic intermediate biosynthesis; chorismate biosynthesis; chorismate from D-erythrose 4-phosphate and phosphoenolpyruvate: step 7/7. In terms of biological role, catalyzes the anti-1,4-elimination of the C-3 phosphate and the C-6 proR hydrogen from 5-enolpyruvylshikimate-3-phosphate (EPSP) to yield chorismate, which is the branch point compound that serves as the starting substrate for the three terminal pathways of aromatic amino acid biosynthesis. This reaction introduces a second double bond into the aromatic ring system. This is Chorismate synthase from Bordetella avium (strain 197N).